A 712-amino-acid polypeptide reads, in one-letter code: Nucleolin (712 aa).

The disordered stretch occupies residues 1-305 (MVKLAKAGKN…KKQKVEGTEP (305 aa)). 3 positions are modified to N6-acetyllysine: K9, K15, and K16. Residues 24-43 (VEEDSEDEEMSEDEEDDSSG) show a composition bias toward acidic residues. Phosphoserine occurs at positions 28, 34, 41, and 42. Over residues 56-107 (AAATSAKKVVVSPTKKVAVATPAKKAAVTPGKKAAATPAKKTVTPAKAVTTP) the composition is skewed to low complexity. Repeat unit 1 spans residues 58 to 65 (ATSAKKVV). The segment at 58–135 (ATSAKKVVVS…GAAIPAKGAK (78 aa)) is 8 X 8 AA tandem repeats of X-T-P-X-K-K-X-X. A Phosphoserine modification is found at S67. Phosphothreonine is present on residues T69, T76, T84, and T92. Tandem repeats lie at residues 75-82 (ATPAKKAA), 83-90 (VTPGKKAA), and 91-98 (ATPAKKTV). Residue K96 is modified to N6-acetyllysine. Position 99 is a phosphothreonine (T99). The 5; truncated repeat unit spans residues 99-104 (TPAKAV). K102 is subject to N6-acetyllysine. The stretch at 105–112 (TTPGKKGA) is repeat 6. T106 is subject to Phosphothreonine. The residue at position 109 (K109) is an N6-acetyllysine. Phosphothreonine is present on T113. K116 is subject to N6-acetyllysine. Tandem repeats lie at residues 120 to 127 (ATPGKKGA) and 128 to 135 (AIPAKGAK). T121 is modified (phosphothreonine). Low complexity predominate over residues 122 to 137 (PGKKGAAIPAKGAKNG). K124 carries the post-translational modification N6-acetyllysine. S145 and S153 each carry phosphoserine. Acidic residues predominate over residues 145-171 (SDEEEEDDSEEDEDDDEDEDEDEDEIE). The segment covering 172–183 (PAAMKAAAAAPA) has biased composition (low complexity). Residues S184 and S206 each carry the phosphoserine modification. A compositionally biased stretch (acidic residues) spans 184-211 (SEDEDDEDDEDDEDEDDDEEDDSEEEAM). T214 carries the post-translational modification Phosphothreonine. Positions 234 to 274 (EDEDEEEDDEDEDDDDDDDDDDEDDEDEDDEEEEEEEEEEP) are enriched in acidic residues. Over residues 275 to 302 (VKEAPGKRKKEMAKQKAAPEAKKQKVEG) the composition is skewed to basic and acidic residues. A Glycyl lysine isopeptide (Lys-Gly) (interchain with G-Cter in SUMO1); alternate cross-link involves residue K299. K299 participates in a covalent cross-link: Glycyl lysine isopeptide (Lys-Gly) (interchain with G-Cter in SUMO2); alternate. A Phosphothreonine modification is found at T303. RRM domains lie at 309 to 385 (FNLF…KPKG) and 395 to 468 (RTLL…YTGE). K320 carries the post-translational modification N6-acetyllysine. Residue K326 forms a Glycyl lysine isopeptide (Lys-Gly) (interchain with G-Cter in SUMO1); alternate linkage. Residue K326 forms a Glycyl lysine isopeptide (Lys-Gly) (interchain with G-Cter in SUMO2); alternate linkage. N6-acetyllysine is present on K350. A Phosphoserine modification is found at S358. T369 carries the post-translational modification Phosphothreonine. A Glycyl lysine isopeptide (Lys-Gly) (interchain with G-Cter in SUMO2) cross-link involves residue K372. K379 participates in a covalent cross-link: Glycyl lysine isopeptide (Lys-Gly) (interchain with G-Cter in SUMO2); alternate. Position 379 is an N6-acetyllysine; alternate (K379). N6-acetyllysine occurs at positions 400 and 405. T407 bears the Phosphothreonine mark. N6-acetyllysine occurs at positions 429 and 446. 2 positions are modified to phosphoserine: S460 and S462. 2 positions are modified to N6-acetyllysine: K469 and K479. The region spanning 488 to 562 (KTLVLSNLSY…RAIRLELQGP (75 aa)) is the RRM 3 domain. A Glycyl lysine isopeptide (Lys-Gly) (interchain with G-Cter in SUMO2); alternate cross-link involves residue K515. The residue at position 515 (K515) is an N6-acetyllysine; alternate. K523 carries the post-translational modification N6-acetyllysine. Phosphoserine is present on S565. An N6-acetyllysine modification is found at K574. The RRM 4 domain occupies 574-649 (KTLFVKGLSE…NKVTLDWAKP (76 aa)). K579 participates in a covalent cross-link: Glycyl lysine isopeptide (Lys-Gly) (interchain with G-Cter in SUMO2); alternate. Position 579 is an N6-acetyllysine; alternate (K579). Position 582 is a phosphoserine (S582). A Glycyl lysine isopeptide (Lys-Gly) (interchain with G-Cter in SUMO1); alternate cross-link involves residue K591. Residue K591 forms a Glycyl lysine isopeptide (Lys-Gly) (interchain with G-Cter in SUMO2); alternate linkage. A phosphoserine mark is found at S593 and S621. Residue K626 forms a Glycyl lysine isopeptide (Lys-Gly) (interchain with G-Cter in SUMO2) linkage. Positions 642–712 (VTLDWAKPKG…KPQGKKTKFE (71 aa)) are disordered. K648 is modified (N6-acetyllysine). Residues 652–698 (EGGFGGRGGGRGGFGGRGGGRGGRGGFGGRGRGGFGGRGGFRGGRGG) are compositionally biased toward gly residues. Asymmetric dimethylarginine occurs at positions 658, 662, 668, 672, 675, 681, 683, 689, and 693. R696 carries the asymmetric dimethylarginine; alternate modification. Position 696 is an omega-N-methylarginine; alternate (R696). The segment covering 699–712 (GGDHKPQGKKTKFE) has biased composition (basic and acidic residues).

As to quaternary structure, identified in a IGF2BP1-dependent mRNP granule complex containing untranslated mRNAs. Component of the SWAP complex that consists of NPM1, NCL/nucleolin, PARP1 and SWAP70. Component of a complex which is at least composed of HTATSF1/Tat-SF1, the P-TEFb complex components CDK9 and CCNT1, RNA polymerase II, SUPT5H, and NCL/nucleolin. Interacts with AICDA. Interacts with APTX. Interacts with C1QBP. Interacts with ERBB4. Interacts (via C-terminus) with FMR1 isoform 6 (via N-terminus). Interacts with GZF1; this interaction is important for nucleolar localization of GZF1. Interacts with NSUN2. Interacts with NVL. Interacts (via N-terminus domain) with SETX. Interacts (via RRM1 and C-terminal RRM4/Arg/Gly-rich domains) with TERT; the interaction is important for nucleolar localization of TERT. Interacts with WDR46. Interacts with ZFP36. Interacts with LRRC34. Interacts with RRP1B. Interacts with HNRNPU; this interaction occurs during mitosis. Interacts with RIOK1; RIOK1 recruits NCL to the PRMT5 for symmetrically methylation. Interacts with ZBTB7B. Interacts with MDK; this interaction promotes NCL clustering and lateral movements of this complex into lipid rafts leading to MDK internalization. Interacts with HDGF. Interacts with ALKBH2. Interacts with IGFBP5; this interaction is necessary for IGFBP5 localization to the nucleus. Interacts with DDX24 (when ubiquitinated); this interaction may be important during ribosome biogenesis. Post-translationally, some glutamate residues are glycylated by TTLL8. This modification occurs exclusively on glutamate residues and results in a glycine chain on the gamma-carboxyl group. Symmetrically methylated by PRMT5.

Its subcellular location is the nucleus. It localises to the nucleolus. It is found in the cytoplasm. Functionally, nucleolin is the major nucleolar protein of growing eukaryotic cells. It is found associated with intranucleolar chromatin and pre-ribosomal particles. It induces chromatin decondensation by binding to histone H1. It is thought to play a role in pre-rRNA transcription and ribosome assembly. May play a role in the process of transcriptional elongation. Binds RNA oligonucleotides with 5'-UUAGGG-3' repeats more tightly than the telomeric single-stranded DNA 5'-TTAGGG-3' repeats. This chain is Nucleolin (NCL), found in Pongo abelii (Sumatran orangutan).